A 459-amino-acid chain; its full sequence is Methylenetetrahydrofolate--tRNA-(uracil-5-)-methyltransferase TrmFO (459 aa).

An FAD-binding site is contributed by 11-16 (GAGLAG).

The protein belongs to the MnmG family. TrmFO subfamily. It depends on FAD as a cofactor.

It localises to the cytoplasm. It carries out the reaction uridine(54) in tRNA + (6R)-5,10-methylene-5,6,7,8-tetrahydrofolate + NADH + H(+) = 5-methyluridine(54) in tRNA + (6S)-5,6,7,8-tetrahydrofolate + NAD(+). The enzyme catalyses uridine(54) in tRNA + (6R)-5,10-methylene-5,6,7,8-tetrahydrofolate + NADPH + H(+) = 5-methyluridine(54) in tRNA + (6S)-5,6,7,8-tetrahydrofolate + NADP(+). Its function is as follows. Catalyzes the folate-dependent formation of 5-methyl-uridine at position 54 (M-5-U54) in all tRNAs. The polypeptide is Methylenetetrahydrofolate--tRNA-(uracil-5-)-methyltransferase TrmFO (Synechococcus sp. (strain CC9311)).